Reading from the N-terminus, the 1103-residue chain is Platelet-derived growth factor receptor beta (1103 aa).

Positions 1-31 (MQVPGTMPAPVLKGQALWLPLLLMLSPQASG) are cleaved as a signal peptide. Ig-like C2-type domains lie at 33-120 (LVIT…YIFV), 129-210 (PVDP…YSLQ), 214-309 (INVS…INVT), 331-403 (HRSR…HEDA), and 416-524 (PVRV…VTVV). Residues 33–532 (LVITPPGPEL…VVPHSLPFKV (500 aa)) are Extracellular-facing. Asn-45 and Asn-89 each carry an N-linked (GlcNAc...) asparagine glycan. Intrachain disulfides connect Cys-54/Cys-100 and Cys-149/Cys-190. Asn-215 and Asn-230 each carry an N-linked (GlcNAc...) asparagine glycan. The cysteines at positions 235 and 291 are disulfide-linked. N-linked (GlcNAc...) asparagine glycans are attached at residues Asn-292, Asn-307, Asn-354, Asn-371, Asn-468, and Asn-479. Cys-436 and Cys-508 are disulfide-bonded. A helical membrane pass occupies residues 533 to 553 (VVISAILALVVLTIISLIILI). The Cytoplasmic portion of the chain corresponds to 554 to 1103 (MLWQKKPRYE…PRAEAEDSFL (550 aa)). 3 positions are modified to phosphotyrosine; by autocatalysis: Tyr-562, Tyr-579, and Tyr-581. The region spanning 600–962 (LVLGRTLGSG…QLVLLLERLL (363 aa)) is the Protein kinase domain. ATP contacts are provided by residues 606-614 (LGSGAFGQV) and Lys-634. At Tyr-686 the chain carries Phosphotyrosine; by ABL1 and ABL2. A phosphotyrosine; by autocatalysis mark is found at Tyr-716, Tyr-740, Tyr-751, Tyr-763, Tyr-771, Tyr-775, and Tyr-778. Asp-826 functions as the Proton acceptor in the catalytic mechanism. Tyr-857 carries the phosphotyrosine; by autocatalysis modification. Phosphotyrosine; by ABL1 and ABL2 occurs at positions 934 and 970. 2 positions are modified to phosphotyrosine; by autocatalysis: Tyr-1009 and Tyr-1021. The disordered stretch occupies residues 1017 to 1103 (GDNDYIIPLP…PRAEAEDSFL (87 aa)). Over residues 1039–1059 (SSPSLASSTLNEVNTSSTISC) the composition is skewed to polar residues. Over residues 1065 to 1075 (PQEEPEPEPEP) the composition is skewed to acidic residues. Pro residues predominate over residues 1076-1086 (QPEPQVVPEPP).

The protein belongs to the protein kinase superfamily. Tyr protein kinase family. CSF-1/PDGF receptor subfamily. As to quaternary structure, interacts with homodimeric PDGFB and PDGFD, and with heterodimers formed by PDGFA and PDGFB. May also interact with homodimeric PDGFC. Monomer in the absence of bound ligand. Interaction with homodimeric PDGFB, heterodimers formed by PDGFA and PDGFB or homodimeric PDGFD, leads to receptor dimerization, where both PDGFRA homodimers and heterodimers with PDGFRB are observed. Interacts with SH2B2/APS. Interacts directly (tyrosine phosphorylated) with SHB. Interacts (tyrosine phosphorylated) with PIK3R1 and RASA1. Interacts (tyrosine phosphorylated) with CBL. Interacts (tyrosine phosphorylated) with SRC and SRC family kinases. Interacts (tyrosine phosphorylated) with PIK3C2B, maybe indirectly. Interacts (tyrosine phosphorylated) with SHC1, GRB7, GRB10 and NCK1. Interaction with GRB2 is mediated by SHC1. Interacts (via C-terminus) with NHERF1. N-glycosylated. Post-translationally, ubiquitinated. After autophosphorylation, the receptor is polyubiquitinated, leading to its degradation. In terms of processing, autophosphorylated on tyrosine residues upon ligand binding. Autophosphorylation occurs in trans, i.e. one subunit of the dimeric receptor phosphorylates tyrosine residues on the other subunit. Phosphorylation at Tyr-579, and to a lesser degree, Tyr-581 is important for interaction with SRC. Phosphorylation at Tyr-716 is important for interaction with GRB2. Phosphorylation at Tyr-740 and Tyr-751 is important for interaction with PIK3R1. Phosphorylation at Tyr-751 is important for interaction with NCK1. Phosphorylation at Tyr-771 and Tyr-857 is important for interaction with RASA1/GAP. Phosphorylation at Tyr-857 is important for efficient phosphorylation of PLCG1 and PTPN11, resulting in increased phosphorylation of AKT1, MAPK1/ERK2 and/or MAPK3/ERK1, PDCD6IP/ALIX and STAM, and in increased cell proliferation. Phosphorylation at Tyr-1009 is important for interaction with PTPN11. Phosphorylation at Tyr-1009 and Tyr-1021 is important for interaction with PLCG1. Dephosphorylated by PTPRJ at Tyr-751, Tyr-857, Tyr-1009 and Tyr-1021. Dephosphorylated by PTPN2 at Tyr-579 and Tyr-1021.

It localises to the cell membrane. The protein localises to the cytoplasmic vesicle. It is found in the lysosome lumen. It catalyses the reaction L-tyrosyl-[protein] + ATP = O-phospho-L-tyrosyl-[protein] + ADP + H(+). Present in an inactive conformation in the absence of bound ligand. Binding of PDGFB and/or PDGFD leads to dimerization and activation by autophosphorylation on tyrosine residues. Its function is as follows. Tyrosine-protein kinase that acts as a cell-surface receptor for homodimeric PDGFB and PDGFD and for heterodimers formed by PDGFA and PDGFB, and plays an essential role in the regulation of embryonic development, cell proliferation, survival, differentiation, chemotaxis and migration. Plays an essential role in blood vessel development by promoting proliferation, migration and recruitment of pericytes and smooth muscle cells to endothelial cells. Plays a role in the migration of vascular smooth muscle cells and the formation of neointima at vascular injury sites. Required for normal development of the cardiovascular system. Required for normal recruitment of pericytes (mesangial cells) in the kidney glomerulus, and for normal formation of a branched network of capillaries in kidney glomeruli. Promotes rearrangement of the actin cytoskeleton and the formation of membrane ruffles. Binding of its cognate ligands - homodimeric PDGFB, heterodimers formed by PDGFA and PDGFB or homodimeric PDGFD -leads to the activation of several signaling cascades; the response depends on the nature of the bound ligand and is modulated by the formation of heterodimers between PDGFRA and PDGFRB. Phosphorylates PLCG1, PIK3R1, PTPN11, RASA1/GAP, CBL, SHC1 and NCK1. Activation of PLCG1 leads to the production of the cellular signaling molecules diacylglycerol and inositol 1,4,5-trisphosphate, mobilization of cytosolic Ca(2+) and the activation of protein kinase C. Phosphorylation of PIK3R1, the regulatory subunit of phosphatidylinositol 3-kinase, leads to the activation of the AKT1 signaling pathway. Phosphorylation of SHC1, or of the C-terminus of PTPN11, creates a binding site for GRB2, resulting in the activation of HRAS, RAF1 and down-stream MAP kinases, including MAPK1/ERK2 and/or MAPK3/ERK1. Promotes phosphorylation and activation of SRC family kinases. Promotes phosphorylation of PDCD6IP/ALIX and STAM. Receptor signaling is down-regulated by protein phosphatases that dephosphorylate the receptor and its down-stream effectors, and by rapid internalization of the activated receptor. This Canis lupus familiaris (Dog) protein is Platelet-derived growth factor receptor beta (PDGFRB).